The following is a 193-amino-acid chain: Peptidyl-tRNA hydrolase (193 aa).

Residue Tyr-14 participates in tRNA binding. His-19 acts as the Proton acceptor in catalysis. 3 residues coordinate tRNA: Phe-64, Asn-66, and Asn-112.

This sequence belongs to the PTH family. In terms of assembly, monomer.

Its subcellular location is the cytoplasm. It catalyses the reaction an N-acyl-L-alpha-aminoacyl-tRNA + H2O = an N-acyl-L-amino acid + a tRNA + H(+). Hydrolyzes ribosome-free peptidyl-tRNAs (with 1 or more amino acids incorporated), which drop off the ribosome during protein synthesis, or as a result of ribosome stalling. In terms of biological role, catalyzes the release of premature peptidyl moieties from peptidyl-tRNA molecules trapped in stalled 50S ribosomal subunits, and thus maintains levels of free tRNAs and 50S ribosomes. This chain is Peptidyl-tRNA hydrolase, found in Bartonella henselae (strain ATCC 49882 / DSM 28221 / CCUG 30454 / Houston 1) (Rochalimaea henselae).